Consider the following 275-residue polypeptide: 4-hydroxy-tetrahydrodipicolinate reductase (275 aa).

NAD(+) contacts are provided by residues 13 to 18 and 108 to 110; these read GAGGKM and GTT. Residue H164 is the Proton donor/acceptor of the active site. Residue H165 participates in (S)-2,3,4,5-tetrahydrodipicolinate binding. The Proton donor role is filled by K168. 174 to 175 contacts (S)-2,3,4,5-tetrahydrodipicolinate; the sequence is GT.

This sequence belongs to the DapB family.

It localises to the cytoplasm. It catalyses the reaction (S)-2,3,4,5-tetrahydrodipicolinate + NAD(+) + H2O = (2S,4S)-4-hydroxy-2,3,4,5-tetrahydrodipicolinate + NADH + H(+). The enzyme catalyses (S)-2,3,4,5-tetrahydrodipicolinate + NADP(+) + H2O = (2S,4S)-4-hydroxy-2,3,4,5-tetrahydrodipicolinate + NADPH + H(+). It functions in the pathway amino-acid biosynthesis; L-lysine biosynthesis via DAP pathway; (S)-tetrahydrodipicolinate from L-aspartate: step 4/4. Functionally, catalyzes the conversion of 4-hydroxy-tetrahydrodipicolinate (HTPA) to tetrahydrodipicolinate. The polypeptide is 4-hydroxy-tetrahydrodipicolinate reductase (Picosynechococcus sp. (strain ATCC 27264 / PCC 7002 / PR-6) (Agmenellum quadruplicatum)).